We begin with the raw amino-acid sequence, 160 residues long: Putative pre-16S rRNA nuclease (160 aa).

This sequence belongs to the YqgF nuclease family.

Its subcellular location is the cytoplasm. Could be a nuclease involved in processing of the 5'-end of pre-16S rRNA. This Cereibacter sphaeroides (strain ATCC 17025 / ATH 2.4.3) (Rhodobacter sphaeroides) protein is Putative pre-16S rRNA nuclease.